Here is a 1464-residue protein sequence, read N- to C-terminus: MDAAAEMQKVVSLRRGGGGSSSRGAASMWWSADNGVFSRSRASSSGEDGEDDEEALRWAALEKLPTYDRVRRAVLPVVEEGGGGGEAGKKVVDVLSLGPQERRALLERLVRVAEDDNERFLLKLKERIDRVGIDIPTIEVRFEHLEAEAEVRVGNSGLPTVLNSMTNKLEGAANALGILPNKKQTMPILHDVSGIVKPRRMTLLLGPPGSGKTTLLLALAGRLGKDIKFSGQVTYNGHQMEDFVPQRTAAYISQHDLHIGEMTVRETLSFSARCQGVGSRFDMLTELSRREKAANIKPDADIDAFMKASAMEGQETNLITDYILKILGLDICADTMVGDDMVRGISGGQRKRVTTGEMLVGPANALFMDEISTGLDSSTTFQIVKSLRQAIHILGGTAVISLLQPAPETYDLFDDIILLSDGQIVYQGPREGVLEFFELMGFKCPERKGVADFLQEVTSRKDQKQYWMQHDKPYRYVPVKDFASAFQSFHTGKSIANELATPFDKSKNHPAALTTSRYGVSAMELLKANIDREFLLMKRNSFVYIFRACQLMVVSAIAMTVFFRTKMHRDSVTDGVIFMGALFFSVMMIMFNGLSELPLTIFKLPVFFKQRDLLFFPAWTYTIPSWILKIPMSFIEVGGFVFMSYYVIGFDPSAGRFFKQYLLMLAINQMAAALFRFVGGAARNMIVANVFGSFMLLIFMVLGGFILVREKVKKWWIWGYWISPMMYAQNAISVNEFLGHSWDKVLNNSLSNETLGVQALRSRGVFPEAKWYWIGFGALLGFIMLFNGLFTLALTYLKPYGKSQPSVSEEELKEKQANINGNVLDVDTMASSTNLAIVDNTETSSEIADNSQPTQRGMVLPFAPLSLTFDNIKYSVDMPQEMKAHGIVEDRLELLKGVSGSFRPGVLTALMGVSGAGKTTLMDVLAGRKTGGYIEGNITISGYPKKQETFARVSGYCEQNDIHSPQVTVSESLLFSAWLRLPKDVDSNTRKMFIEEVMELVELKPLRDALVGLPGVNGLSTEQRKRLTIAVELVANPSIIFMDEPTSGLDARAAAIVMRTVRNTVDTGRTVVCTIHQPSIDIFEAFDELFLMKRGGEEIYVGPLGHQSSELIKYFEGIKGVSRIKDGYNPATWMLEVSTISQEQALGVDFCDIYRKSELFQRNKALIQELSTPPPGSSELYFPTKYSLSFLNQCLACLWKMHLSYWRNPPYNAIRLFFTTVIALLFGTIFWDLGGKTGKSQDLFNAMGSMYSAVLFIGVLNSQSVQPVVSVERTVFYRERAAGMYSAFPYAFGQVAIEFPYTLVQSIIYGIIVYSMIGFKWTAAKFFWYLFFMFFTFLYFTFYGMMAVGLTPSYHVASIVSSAFYGIWNLFSGFIIPRPKVPIWWRWYCWICPVAWTLYGLVASQFGDIMTPMDDGTPVKIFVENYFDFKHSWLGVVAVVIVAFTMLFAFLFGFAIMKLNFQKR.

Residues 1-26 (MDAAAEMQKVVSLRRGGGGSSSRGAA) are disordered. In terms of domain architecture, ABC transporter 1 spans 173-446 (ANALGILPNK…FELMGFKCPE (274 aa)). Residue 206-213 (GPPGSGKT) coordinates ATP. The ABC transmembrane type-2 1 domain maps to 524-737 (ELLKANIDRE…AQNAISVNEF (214 aa)). Transmembrane regions (helical) follow at residues 542-562 (FVYI…MTVF), 575-595 (GVIF…NGLS), 630-650 (IPMS…VIGF), 662-682 (LLML…GGAA), 686-706 (IVAN…GGFI), 715-735 (WWIW…ISVN), and 774-794 (IGFG…TLAL). The 253-residue stretch at 867-1119 (LTFDNIKYSV…ELIKYFEGIK (253 aa)) folds into the ABC transporter 2 domain. ATP is bound at residue 912–919 (GVSGAGKT). The region spanning 1192-1406 (NQCLACLWKM…TLYGLVASQF (215 aa)) is the ABC transmembrane type-2 2 domain. 7 helical membrane-spanning segments follow: residues 1213–1233 (AIRL…FWDL), 1243–1263 (LFNA…LNSQ), 1299–1319 (FPYT…MIGF), 1326–1346 (FFWY…YGMM), 1356–1376 (VASI…GFII), 1387–1407 (WYCW…SQFG), and 1436–1456 (VVAV…GFAI).

It belongs to the ABC transporter superfamily. ABCG family. PDR (TC 3.A.1.205) subfamily.

The protein localises to the membrane. In terms of biological role, may be a general defense protein. The protein is ABC transporter G family member 35 of Oryza sativa subsp. japonica (Rice).